Consider the following 443-residue polypeptide: Trigger factor (443 aa).

The PPIase FKBP-type domain maps to 163–249 (KDAAIIDYQA…LKSLKEEILP (87 aa)).

This sequence belongs to the FKBP-type PPIase family. Tig subfamily.

Its subcellular location is the cytoplasm. It catalyses the reaction [protein]-peptidylproline (omega=180) = [protein]-peptidylproline (omega=0). Its function is as follows. Involved in protein export. Acts as a chaperone by maintaining the newly synthesized protein in an open conformation. Functions as a peptidyl-prolyl cis-trans isomerase. The polypeptide is Trigger factor (Desulfosudis oleivorans (strain DSM 6200 / JCM 39069 / Hxd3) (Desulfococcus oleovorans)).